A 1384-amino-acid polypeptide reads, in one-letter code: DNA-directed RNA polymerase subunit beta (1384 aa).

This sequence belongs to the RNA polymerase beta chain family. The RNAP catalytic core consists of 2 alpha, 1 beta, 1 beta' and 1 omega subunit. When a sigma factor is associated with the core the holoenzyme is formed, which can initiate transcription.

It carries out the reaction RNA(n) + a ribonucleoside 5'-triphosphate = RNA(n+1) + diphosphate. In terms of biological role, DNA-dependent RNA polymerase catalyzes the transcription of DNA into RNA using the four ribonucleoside triphosphates as substrates. The chain is DNA-directed RNA polymerase subunit beta from Stenotrophomonas maltophilia (strain R551-3).